Here is a 173-residue protein sequence, read N- to C-terminus: Large ribosomal subunit protein uL15 (173 aa).

Residues 1–11 (MKLNEIRDNQG) are compositionally biased toward basic and acidic residues. Positions 1 to 50 (MKLNEIRDNQGARKSRVRVGRGIGSGLGKTGGRGQKGQKSRSGVSINGFE) are disordered. Over residues 21–35 (RGIGSGLGKTGGRGQ) the composition is skewed to gly residues.

This sequence belongs to the universal ribosomal protein uL15 family. As to quaternary structure, part of the 50S ribosomal subunit.

Binds to the 23S rRNA. The chain is Large ribosomal subunit protein uL15 from Rhizorhabdus wittichii (strain DSM 6014 / CCUG 31198 / JCM 15750 / NBRC 105917 / EY 4224 / RW1) (Sphingomonas wittichii).